The primary structure comprises 243 residues: Probable 6-oxopurine nucleoside phosphorylase (243 aa).

Phosphate is bound by residues Thr8 and 48–49; that span reads RH. Met174 lines the substrate pocket. Thr175 serves as a coordination point for phosphate. Position 198-200 (198-200) interacts with substrate; it reads NYA.

It belongs to the PNP/MTAP phosphorylase family. MTAP subfamily. Homohexamer. Dimer of a homotrimer.

It carries out the reaction a purine D-ribonucleoside + phosphate = a purine nucleobase + alpha-D-ribose 1-phosphate. The protein operates within purine metabolism; purine nucleoside salvage. Functionally, purine nucleoside phosphorylase which is highly specific for 6-oxopurine nucleosides. Cleaves guanosine or inosine to respective bases and sugar-1-phosphate molecules. Involved in purine salvage. The sequence is that of Probable 6-oxopurine nucleoside phosphorylase from Archaeoglobus fulgidus (strain ATCC 49558 / DSM 4304 / JCM 9628 / NBRC 100126 / VC-16).